Here is an 88-residue protein sequence, read N- to C-terminus: Small ribosomal subunit protein bS20 (88 aa).

Residues 1–27 form a disordered region; it reads MANSKSAKKRALQSEKRRQHNASRRSM.

The protein belongs to the bacterial ribosomal protein bS20 family.

In terms of biological role, binds directly to 16S ribosomal RNA. The polypeptide is Small ribosomal subunit protein bS20 (Shewanella oneidensis (strain ATCC 700550 / JCM 31522 / CIP 106686 / LMG 19005 / NCIMB 14063 / MR-1)).